We begin with the raw amino-acid sequence, 306 residues long: L-lactate dehydrogenase (306 aa).

Residues Val-11, Asp-32, Lys-37, and 76 to 77 (GA) contribute to the NAD(+) site. Residues Gln-79 and Arg-85 each coordinate substrate. NAD(+) is bound by residues Ser-98, 115 to 117 (VSN), and Ser-140. Residue 117–120 (NPVD) coordinates substrate. Residue 145–148 (DTAR) coordinates substrate. 2 residues coordinate beta-D-fructose 1,6-bisphosphate: Arg-150 and His-165. Catalysis depends on His-172, which acts as the Proton acceptor. Residue Tyr-214 is modified to Phosphotyrosine. Position 223 (Thr-223) interacts with substrate.

Belongs to the LDH/MDH superfamily. LDH family. As to quaternary structure, homotetramer.

The protein localises to the cytoplasm. It carries out the reaction (S)-lactate + NAD(+) = pyruvate + NADH + H(+). The protein operates within fermentation; pyruvate fermentation to lactate; (S)-lactate from pyruvate: step 1/1. With respect to regulation, allosterically activated by fructose 1,6-bisphosphate (FBP). Functionally, catalyzes the conversion of lactate to pyruvate. The polypeptide is L-lactate dehydrogenase (Synechococcus sp. (strain JA-3-3Ab) (Cyanobacteria bacterium Yellowstone A-Prime)).